We begin with the raw amino-acid sequence, 177 residues long: Probable nicotinate-nucleotide adenylyltransferase (177 aa).

Belongs to the NadD family.

It carries out the reaction nicotinate beta-D-ribonucleotide + ATP + H(+) = deamido-NAD(+) + diphosphate. It participates in cofactor biosynthesis; NAD(+) biosynthesis; deamido-NAD(+) from nicotinate D-ribonucleotide: step 1/1. Catalyzes the reversible adenylation of nicotinate mononucleotide (NaMN) to nicotinic acid adenine dinucleotide (NaAD). The polypeptide is Probable nicotinate-nucleotide adenylyltransferase (Nitratiruptor sp. (strain SB155-2)).